The primary structure comprises 118 residues: Large ribosomal subunit protein bL20 (118 aa).

The protein belongs to the bacterial ribosomal protein bL20 family.

Binds directly to 23S ribosomal RNA and is necessary for the in vitro assembly process of the 50S ribosomal subunit. It is not involved in the protein synthesizing functions of that subunit. The protein is Large ribosomal subunit protein bL20 of Francisella tularensis subsp. tularensis (strain WY96-3418).